We begin with the raw amino-acid sequence, 340 residues long: GTP 3',8-cyclase (340 aa).

Residues 8 to 229 (KLGRPIRDLR…IEQHFEISPV (222 aa)) enclose the Radical SAM core domain. Residue R17 coordinates GTP. Residues C24 and C28 each coordinate [4Fe-4S] cluster. Residue Y30 coordinates S-adenosyl-L-methionine. A [4Fe-4S] cluster-binding site is contributed by C31. GTP is bound at residue R71. Residue G75 coordinates S-adenosyl-L-methionine. A GTP-binding site is contributed by T102. Residue S126 participates in S-adenosyl-L-methionine binding. Residue K163 participates in GTP binding. An S-adenosyl-L-methionine-binding site is contributed by M197. 2 residues coordinate [4Fe-4S] cluster: C261 and C264. 266 to 268 (RAR) is a binding site for GTP. Residue C278 participates in [4Fe-4S] cluster binding.

Belongs to the radical SAM superfamily. MoaA family. As to quaternary structure, monomer and homodimer. [4Fe-4S] cluster serves as cofactor.

It carries out the reaction GTP + AH2 + S-adenosyl-L-methionine = (8S)-3',8-cyclo-7,8-dihydroguanosine 5'-triphosphate + 5'-deoxyadenosine + L-methionine + A + H(+). Its pathway is cofactor biosynthesis; molybdopterin biosynthesis. Its function is as follows. Catalyzes the cyclization of GTP to (8S)-3',8-cyclo-7,8-dihydroguanosine 5'-triphosphate. This Staphylococcus epidermidis (strain ATCC 35984 / DSM 28319 / BCRC 17069 / CCUG 31568 / BM 3577 / RP62A) protein is GTP 3',8-cyclase.